The primary structure comprises 488 residues: GTPase Der (488 aa).

Residues 3–166 form the EngA-type G 1 domain; that stretch reads PVVALVGRPN…YALAPYAEAL (164 aa). GTP-binding positions include 9–16, 56–60, and 118–121; these read GRPNVGKS, DTGGI, and NKVD. Positions 168-192 are disordered; it reads LNRDGDDEEEKEEREYTEEEAEAEQ. Acidic residues predominate over residues 172–190; sequence GDDEEEKEEREYTEEEAEA. Residues 200–373 enclose the EngA-type G 2 domain; the sequence is IKLAVIGKPN…SVQEAYESAT (174 aa). GTP contacts are provided by residues 206 to 213, 253 to 257, and 318 to 321; these read GKPNVGKS, DTAGV, and NKWD. One can recognise a KH-like domain in the interval 374–458; that stretch reads RRVSTSMLTR…PIQVRFQDGD (85 aa).

The protein belongs to the TRAFAC class TrmE-Era-EngA-EngB-Septin-like GTPase superfamily. EngA (Der) GTPase family. In terms of assembly, associates with the 50S ribosomal subunit.

GTPase that plays an essential role in the late steps of ribosome biogenesis. This chain is GTPase Der, found in Shewanella woodyi (strain ATCC 51908 / MS32).